Reading from the N-terminus, the 48-residue chain is ATP synthase protein 8 (48 aa).

The helical transmembrane segment at 12–32 (LLTFGMLAISMLLYLVSTIIL) threads the bilayer.

This sequence belongs to the ATPase protein 8 family. F-type ATPases have 2 components, CF(1) - the catalytic core - and CF(0) - the membrane proton channel.

The protein localises to the mitochondrion membrane. Functionally, mitochondrial membrane ATP synthase (F(1)F(0) ATP synthase or Complex V) produces ATP from ADP in the presence of a proton gradient across the membrane which is generated by electron transport complexes of the respiratory chain. F-type ATPases consist of two structural domains, F(1) - containing the extramembraneous catalytic core and F(0) - containing the membrane proton channel, linked together by a central stalk and a peripheral stalk. During catalysis, ATP synthesis in the catalytic domain of F(1) is coupled via a rotary mechanism of the central stalk subunits to proton translocation. Part of the complex F(0) domain. Minor subunit located with subunit a in the membrane. The chain is ATP synthase protein 8 (ATP8) from Debaryomyces hansenii (strain ATCC 36239 / CBS 767 / BCRC 21394 / JCM 1990 / NBRC 0083 / IGC 2968) (Yeast).